We begin with the raw amino-acid sequence, 88 residues long: Small ribosomal subunit protein bS20 (88 aa).

It belongs to the bacterial ribosomal protein bS20 family.

Binds directly to 16S ribosomal RNA. This Methylorubrum extorquens (strain CM4 / NCIMB 13688) (Methylobacterium extorquens) protein is Small ribosomal subunit protein bS20.